The primary structure comprises 188 residues: Photosystem I assembly protein Ycf4 (188 aa).

A run of 2 helical transmembrane segments spans residues 26–46 (YFWAVIVSIGGLGFLLAGLSS) and 70–90 (LLFYGTAGTLLAIYLWLSLLW).

The protein belongs to the Ycf4 family.

It is found in the cellular thylakoid membrane. Seems to be required for the assembly of the photosystem I complex. This chain is Photosystem I assembly protein Ycf4, found in Microcystis aeruginosa (strain NIES-843 / IAM M-2473).